The chain runs to 155 residues: Ribosomal RNA large subunit methyltransferase H (155 aa).

Residues L72, G103, and L122–L127 each bind S-adenosyl-L-methionine.

This sequence belongs to the RNA methyltransferase RlmH family. Homodimer.

The protein localises to the cytoplasm. It carries out the reaction pseudouridine(1915) in 23S rRNA + S-adenosyl-L-methionine = N(3)-methylpseudouridine(1915) in 23S rRNA + S-adenosyl-L-homocysteine + H(+). In terms of biological role, specifically methylates the pseudouridine at position 1915 (m3Psi1915) in 23S rRNA. The protein is Ribosomal RNA large subunit methyltransferase H of Haemophilus influenzae (strain PittGG).